The chain runs to 548 residues: Pentatricopeptide repeat-containing protein At5g15300 (548 aa).

PPR repeat units lie at residues 76-110 (DVSICNHVLRGSAQSMKPEKTVSLYTEMEKRGVSP), 111-145 (DRYTFTFVLKACSKLEWRSNGFAFHGKVVRHGFVL), 146-176 (NEYVKNALILFHANCGDLGIASELFDDSAKA), 177-211 (HKVAWSSMTSGYAKRGKIDEAMRLFDEMPYKDQVA), 212-238 (WNVMITGCLKCKEMDSARELFDRFTEK), 239-273 (DVVTWNAMISGYVNCGYPKEALGIFKEMRDAGEHP), 274-308 (DVVTILSLLSACAVLGDLETGKRLHIYILETASVS), 314-348 (GTPIWNALIDMYAKCGSIDRAIEVFRGVKDRDLST), 349-378 (WNTLIVGLALHHAEGSIEMFEEMQRLKVWP), 379-409 (NEVTFIGVILACSHSGRVDEGRKYFSLMRDM), and 415-445 (NIKHYGCMVDMLGRAGQLEEAFMFVESMKIE). The interval 450–525 (VWRTLLGACK…PTGVSLIEED (76 aa)) is type E motif.

This sequence belongs to the PPR family. PCMP-E subfamily.

The polypeptide is Pentatricopeptide repeat-containing protein At5g15300 (PCMP-E40) (Arabidopsis thaliana (Mouse-ear cress)).